The following is a 356-amino-acid chain: tRNA N6-adenosine threonylcarbamoyltransferase (356 aa).

A divalent metal cation is bound by residues histidine 122, histidine 126, and tyrosine 143. Residues 143-147 (YVSGG), aspartate 175, glycine 190, glutamate 194, and asparagine 287 contribute to the substrate site. Aspartate 315 provides a ligand contact to a divalent metal cation.

Belongs to the KAE1 / TsaD family. As to quaternary structure, component of the EKC/KEOPS complex composed of at least BUD32, CGI121, GON7, KAE1 and PCC1; the whole complex dimerizes. Requires a divalent metal cation as cofactor.

The protein resides in the cytoplasm. It is found in the nucleus. It carries out the reaction L-threonylcarbamoyladenylate + adenosine(37) in tRNA = N(6)-L-threonylcarbamoyladenosine(37) in tRNA + AMP + H(+). In terms of biological role, component of the EKC/KEOPS complex that is required for the formation of a threonylcarbamoyl group on adenosine at position 37 (t(6)A37) in tRNAs that read codons beginning with adenine. The complex is probably involved in the transfer of the threonylcarbamoyl moiety of threonylcarbamoyl-AMP (TC-AMP) to the N6 group of A37. KAE1 likely plays a direct catalytic role in this reaction, but requires other protein(s) of the complex to fulfill this activity. The EKC/KEOPS complex also promotes both telomere uncapping and telomere elongation. The complex is required for efficient recruitment of transcriptional coactivators. The polypeptide is tRNA N6-adenosine threonylcarbamoyltransferase (Chaetomium globosum (strain ATCC 6205 / CBS 148.51 / DSM 1962 / NBRC 6347 / NRRL 1970) (Soil fungus)).